The sequence spans 635 residues: MERWSINDSAKIYNLNNWGADLFSINKKGNVCVHPSSNSKHSIDLRALVDDLIKRKIKPPILLRFMDVLQGRIASINRVFKNAIQENNYPAKYQTFYPIKVNQQRQVVEAIANFGKRYNIGLEVGSKPELVAGISFATGNNLPIICNGYKDTEYIEMVLSATKIGYDITLVVEKLFELEKIIELVKKTGVQPKLGIRVKLSSKGIGKWATSGGEDAKFGLRMSEIIAAIEMLEKHDLIKCVKLLHFHIGSQITKIDKIKTALIEGARIYAEMRKLGVGIEYLDIGGGLGVDYDGSKSSNFSSVNYSIEEYANDVIYQIKNICEDAGVECPNIISESGRATVAHYSVLVTNVLNTNTQNIMPDFEATLNEAEKLAPTVKKLEDIYKSIDRYSLREDYHDTLQLIQEAVSLFNLGYLTLNDRAMAEWLYGKIIRKINSIVEKIKPIPEELQNFQLSLRQTYFANFSLFQSVPDSWAIDQLFPIVPIQRLNQKPDVIASIADITCDSDGEITSFVGENGRTKFLPLHKIRKDEAYYIGFFLIGAYQEILGDMHNLFGDTNAVHITFNKKTGYIIDTVINGDATWESLKYVQYKGPEILKRVRDNLEKDVALRKISIEESSHFLELLDRTLLGYTYLGE.

N6-(pyridoxal phosphate)lysine is present on Lys100. Residue 282–292 (LDIGGGLGVDY) participates in substrate binding.

It belongs to the Orn/Lys/Arg decarboxylase class-II family. SpeA subfamily. The cofactor is Mg(2+). Pyridoxal 5'-phosphate serves as cofactor.

The enzyme catalyses L-arginine + H(+) = agmatine + CO2. It participates in amine and polyamine biosynthesis; agmatine biosynthesis; agmatine from L-arginine: step 1/1. In terms of biological role, catalyzes the biosynthesis of agmatine from arginine. The polypeptide is Biosynthetic arginine decarboxylase (Geotalea uraniireducens (strain Rf4) (Geobacter uraniireducens)).